A 467-amino-acid polypeptide reads, in one-letter code: Cysteine--tRNA ligase (467 aa).

Residue Cys29 coordinates Zn(2+). The short motif at 31-41 is the 'HIGH' region element; the sequence is PTVYDDSHLGH. Residues 155 to 174 are disordered; sequence KLSGRGEDLEQVSRIESSEE. The segment covering 158–174 has biased composition (basic and acidic residues); it reads GRGEDLEQVSRIESSEE. Positions 210, 239, and 243 each coordinate Zn(2+). The short motif at 271-275 is the 'KMSKS' region element; it reads KMSKS. Lys274 serves as a coordination point for ATP.

Belongs to the class-I aminoacyl-tRNA synthetase family. In terms of assembly, monomer. It depends on Zn(2+) as a cofactor.

Its subcellular location is the cytoplasm. The catalysed reaction is tRNA(Cys) + L-cysteine + ATP = L-cysteinyl-tRNA(Cys) + AMP + diphosphate. The polypeptide is Cysteine--tRNA ligase (Wolinella succinogenes (strain ATCC 29543 / DSM 1740 / CCUG 13145 / JCM 31913 / LMG 7466 / NCTC 11488 / FDC 602W) (Vibrio succinogenes)).